Consider the following 429-residue polypeptide: UDP-N-acetylglucosamine 1-carboxyvinyltransferase (429 aa).

A phosphoenolpyruvate-binding site is contributed by 22–23 (KN). Arginine 102 is a UDP-N-acetyl-alpha-D-glucosamine binding site. The Proton donor role is filled by cysteine 126. Position 126 is a 2-(S-cysteinyl)pyruvic acid O-phosphothioketal (cysteine 126). UDP-N-acetyl-alpha-D-glucosamine is bound by residues aspartate 316 and isoleucine 338.

The protein belongs to the EPSP synthase family. MurA subfamily.

It is found in the cytoplasm. The catalysed reaction is phosphoenolpyruvate + UDP-N-acetyl-alpha-D-glucosamine = UDP-N-acetyl-3-O-(1-carboxyvinyl)-alpha-D-glucosamine + phosphate. The protein operates within cell wall biogenesis; peptidoglycan biosynthesis. In terms of biological role, cell wall formation. Adds enolpyruvyl to UDP-N-acetylglucosamine. This is UDP-N-acetylglucosamine 1-carboxyvinyltransferase from Methylorubrum extorquens (strain PA1) (Methylobacterium extorquens).